The primary structure comprises 150 residues: Translation machinery-associated protein 17 (150 aa).

Residues Ser-24 and Ser-68 each carry the phosphoserine modification. The tract at residues 110-139 (RKTGHGKSKHEVEAKDNTNKGPDVDMDNSN) is disordered. Residues 118 to 127 (KHEVEAKDNT) are compositionally biased toward basic and acidic residues.

As to quaternary structure, interacts with RPT6. Interacts with the 40S and 60S ribosomal subunits.

It localises to the cytoplasm. The protein resides in the nucleus. Its function is as follows. ATPase-dedicated chaperone that assists the formation of the RPT6-RPT3 ATPase pair, an early step in proteasome assembly. Plays a key role in maintaining homeostatic proteasome levels and adjusting proteasome assembly when demands increase, such as during proteasome stresses. Function overlaps with RPN14. This is Translation machinery-associated protein 17 (TMA17) from Saccharomyces cerevisiae (strain ATCC 204508 / S288c) (Baker's yeast).